The primary structure comprises 174 residues: Thioredoxin O, mitochondrial (174 aa).

The N-terminal 59 residues, 1–59 (MALAHRLCRLPRLLPLAAAAAASKPYLPGKPSPAPPPPLSSPPPFPSLSRLFSTTPSSS), are a transit peptide targeting the mitochondrion. The 113-residue stretch at 60–172 (GDSSMVVVGS…LESTMESLHK (113 aa)) folds into the Thioredoxin domain. Catalysis depends on nucleophile residues C96 and C99. A disulfide bond links C96 and C99.

Belongs to the thioredoxin family. Plant O-type subfamily.

The protein localises to the mitochondrion. Its function is as follows. Probable thiol-disulfide oxidoreductase that may participate in various redox reactions. This Oryza sativa subsp. japonica (Rice) protein is Thioredoxin O, mitochondrial.